Reading from the N-terminus, the 145-residue chain is Brain and acute leukemia cytoplasmic protein (145 aa).

Glycine 2 is lipidated: N-myristoyl glycine. The S-palmitoyl cysteine moiety is linked to residue cysteine 3. Residues 3-35 (CGGSRADAIEPRYYESWTRETESTWLTYTDSDA) form an interaction with CAMK2A region. The interval 27-119 (WLTYTDSDAP…AKRDAKRMPA (93 aa)) is disordered. The span at 32-46 (DSDAPPSAAAPDSGP) shows a compositional bias: low complexity. Positions 83–108 (CETQCPNPQSLSSGPLTQKQNGLQTT) are enriched in polar residues. Basic and acidic residues predominate over residues 109-119 (EAKRDAKRMPA).

In terms of assembly, interacts with CAMK2A. Post-translationally, palmitoylation and myristoylation target the protein to the lipid rafts. Predominantly expressed in neuroectoderm-derived tissues. Expressed in the brain and spinal cord, and at low levels, in the adrenal gland. In the bone marrow, confined to the CD34+ progenitor cells. Not found in peripheral blood mononuclear cells, nor lymph nodes. Tends to be expressed at high levels in acute myeloid leukemia and glioblastoma cells.

The protein localises to the cytoplasm. It is found in the synapse. The protein resides in the synaptosome. Its subcellular location is the membrane raft. It localises to the postsynaptic density. In terms of biological role, may play a synaptic role at the postsynaptic lipid rafts possibly through interaction with CAMK2A. The protein is Brain and acute leukemia cytoplasmic protein of Homo sapiens (Human).